The sequence spans 34 residues: QMDMRCSASVECKQKCLKAIGSIFGKCMNKKCKC.

3 disulfide bridges follow: C6–C27, C12–C32, and C16–C34.

Expressed by the venom gland.

The protein localises to the secreted. In terms of biological role, toxin that acts as an agonist on melanocortin receptors (MC1R, MC3R, MC5R, MC5R). After binding to MC1R, the peptide activates the hMC1R/Gs pathway, but after binding to MC4R, it is not able to activate or antagonize the MC4R/Gs pathway. Inhibits melanocyte stimulating hormone (MSH)-binding to human receptors (Ki=2.9 uM to MC1R, Ki=3.9 uM to MC3R, Ki=2.6 uM to MC4R, Ki=2.2 uM to MC5R). This toxin is structurally unrelated to the natural agonists. The chain is NU-buthitoxin-Ptr1a from Parabuthus transvaalicus (Transvaal thick-tailed scorpion).